Here is a 722-residue protein sequence, read N- to C-terminus: Mesentericin-Y105 transport/processing ATP-binding protein MesD (722 aa).

Residues 16–143 enclose the Peptidase C39 domain; that stretch reads QVDERDCGVA…EEWTGVSIFI (128 aa). Cys-22 is a catalytic residue. Helical transmembrane passes span 171 to 191, 210 to 230, 242 to 262, 287 to 307, 311 to 331, 401 to 421, 429 to 449, and 518 to 538; these read LLVINIVIAALLVTLVSILGS, LGIVSLGLIFAYVIQQLLSYA, LSIDIILSYIKHIFELPMSFF, TMLSVFLDLGILVIVGTVLVV, TLFLISLIAIPAYALVVWLFM, SLLQLSLNVVILWVGAQLVMT, LITYNALLGFFTDPLQNIINL, and IALVGISGSGKSTLVKLLVNF. The 283-residue stretch at 173–455 folds into the ABC transmembrane type-1 domain; the sequence is VINIVIAALL…IINLQTKLQQ (283 aa). Residues 489–722 enclose the ABC transporter domain; it reads LVADHITYKY…GGFYASLFNH (234 aa). 522–529 provides a ligand contact to ATP; that stretch reads GISGSGKS.

Belongs to the ABC transporter superfamily.

It is found in the cell membrane. In terms of biological role, involved in the export process of the bacteriocin mesentericin-Y105. In Leuconostoc mesenteroides, this protein is Mesentericin-Y105 transport/processing ATP-binding protein MesD (mesD).